A 739-amino-acid polypeptide reads, in one-letter code: MSSENKEQHNLSPRDLPEEAYGFPPELPLGAQRGSSTDLRQFEPSDRRRAFRRIHMELHEKPDTNIRQLVMRKLQKSCQCNATKIRNRIFDFFPVLRWLPKYDLKKNILGDMMSGLIVGILLVPQSIAYSLLAGQEPIYGLYTSFFASIIYFLFGTSRHISVGIFGILCLMIGEVVDRELHKACPDIDTTSSSIAMFSNGCVVVNHTLDGLCDKSCYAIKIGSTVTFMAGVYQVAMGFFQVGFVSVYLSDALLSGFVTGASFTILTSQAKYLLGLSLPRSNGVGSVITTWIHIFRNIHKTNICDLITSLLCLLVLVPTKELNEYFKSKLPAPIPTELIVVVAATLASHFGKLNENYNSSIAGQIPTGFMPPQAPDWSLIPNVAVDAIAISIIGFAITVSLSEMFAKKHGYTVKANQEMYAIGFCNIIPSFFHCITTSAALAKTLVKESTGCQTQLSAIVTSLVLLLVLLLIAPLFYSLQKCVLGVITIVNLRGALLKFRDLPKMWRLSRMDTVIWFVTMLSSALLSTEIGLLVGVCFSMFCVILRTQMPKISLLGLEEESEIFESISTYKNLRSKSGIKVFRFIAPLYYINKECFKSALYKKTLNPVLVKAAWKKAAKRKLKEETVTFHGDPDEVSMQLSHDPLELHTVVIDCSAIQFLDTAGIHTLKEVRRDYEAIGIQVLLAQCNPSVRDSLAKGEYCKKEEENLLFYSLSEAVAFAEESQKEKGVCVVNGLSLSGD.

The segment at 1–44 (MSSENKEQHNLSPRDLPEEAYGFPPELPLGAQRGSSTDLRQFEP) is disordered. Ser-12 is modified (phosphoserine). 2 helical membrane passes run 112-132 (MMSG…YSLL) and 137-157 (PIYG…FGTS). Residue Asn-205 is glycosylated (N-linked (GlcNAc...) asparagine). 2 consecutive transmembrane segments (helical) span residues 227–247 (FMAG…VSVY) and 255–275 (GFVT…LLGL). Residue Asn-357 is glycosylated (N-linked (GlcNAc...) asparagine). 4 helical membrane passes run 378–398 (LIPN…AITV), 420–440 (AIGF…SAAL), 455–475 (LSAI…APLF), and 524–544 (LLST…CVIL). Residues 568–719 (TYKNLRSKSG…YSLSEAVAFA (152 aa)) form the STAS domain.

It belongs to the SLC26A/SulP transporter (TC 2.A.53) family. N-glycosylated. As to expression, cartilage and intestine. Expressed in the kidney (at protein level).

It localises to the cell membrane. The protein localises to the apical cell membrane. It carries out the reaction oxalate(in) + sulfate(out) = oxalate(out) + sulfate(in). It catalyses the reaction sulfate(out) + 2 chloride(in) = sulfate(in) + 2 chloride(out). The catalysed reaction is oxalate(out) + 2 chloride(in) = oxalate(in) + 2 chloride(out). The enzyme catalyses bromide(in) + chloride(out) = bromide(out) + chloride(in). It carries out the reaction nitrate(in) + chloride(out) = nitrate(out) + chloride(in). It catalyses the reaction iodide(in) + chloride(out) = iodide(out) + chloride(in). Its function is as follows. Sulfate transporter which mediates sulfate uptake into chondrocytes in order to maintain adequate sulfation of proteoglycans which is needed for cartilage development. Mediates electroneutral anion exchange of sulfate ions for oxalate ions, sulfate and oxalate ions for chloride and/or hydroxyl ions and chloride ions for bromide, iodide and nitrate ions. The coupling of sulfate transport to both hydroxyl and chloride ions likely serves to ensure transport at both acidic pH when most sulfate uptake is mediated by sulfate-hydroxide exchange and alkaline pH when most sulfate uptake is mediated by sulfate-chloride exchange. Essential for chondrocyte proliferation, differentiation and cell size expansion. The sequence is that of Sulfate transporter (Slc26a2) from Rattus norvegicus (Rat).